The primary structure comprises 229 residues: Urease accessory protein UreF (229 aa).

Belongs to the UreF family. In terms of assembly, ureD, UreF and UreG form a complex that acts as a GTP-hydrolysis-dependent molecular chaperone, activating the urease apoprotein by helping to assemble the nickel containing metallocenter of UreC. The UreE protein probably delivers the nickel.

The protein localises to the cytoplasm. Its function is as follows. Required for maturation of urease via the functional incorporation of the urease nickel metallocenter. The polypeptide is Urease accessory protein UreF (Corynebacterium efficiens (strain DSM 44549 / YS-314 / AJ 12310 / JCM 11189 / NBRC 100395)).